Consider the following 192-residue polypeptide: Probable GTP-binding protein EngB (192 aa).

In terms of domain architecture, EngB-type G spans 22–192; that stretch reads QIPEIVFAGR…LLAHLAQYIR (171 aa). GTP contacts are provided by residues 30 to 37, 57 to 61, 75 to 78, 142 to 145, and 172 to 174; these read GRSNVGKS, GKTRL, DLPG, TKDD, and YSS. 2 residues coordinate Mg(2+): Ser-37 and Thr-59.

This sequence belongs to the TRAFAC class TrmE-Era-EngA-EngB-Septin-like GTPase superfamily. EngB GTPase family. The cofactor is Mg(2+).

Functionally, necessary for normal cell division and for the maintenance of normal septation. The chain is Probable GTP-binding protein EngB from Chlorobium phaeobacteroides (strain DSM 266 / SMG 266 / 2430).